The sequence spans 713 residues: Forkhead box protein P2 (713 aa).

Positions 1 to 28 are enriched in polar residues; the sequence is MMQESATETISNSSMNQNGMSTLSSQLD. Disordered regions lie at residues 1 to 45 and 279 to 337; these read MMQE…SEVS and DNGI…TGAS. Low complexity predominate over residues 290–303; that stretch reads TTNNSSSTTSSTTS. The span at 313 to 322 shows a compositional bias: polar residues; sequence SIVNGQSSVL. Residues 324–335 are compositionally biased toward basic and acidic residues; sequence ARRDSSSHEETG. The C2H2-type zinc finger occupies 344–369; it reads GVCKWPGCESICEDFGQFLKHLNNEH. The leucine-zipper stretch occupies residues 386-407; it reads VQQLEIQLSKERERLQAMMTHL. The tract at residues 420–424 is CTBP1-binding; the sequence is PLNLV. Residues 436–457 show a composition bias toward low complexity; the sequence is TSPQSLPQTPTTPTAPVTPITQ. A disordered region spans residues 436–463; sequence TSPQSLPQTPTTPTAPVTPITQGPSVIT. The segment at residues 502–592 is a DNA-binding region (fork-head); the sequence is RPPFTYATLI…SQKITGSPTL (91 aa). 2 disordered regions span residues 647 to 666 and 676 to 713; these read LDHI…QPHI and VIAE…EDLE. Residues 697–713 are compositionally biased toward acidic residues; it reads LEDDREIEEEPLSEDLE.

As to quaternary structure, forms homodimers and heterodimers with FOXP1 and FOXP4. Dimerization is required for DNA-binding. Interacts with CTBP1. Interacts with FOXP1. Interacts with TBR1. Interacts with ZMYM2.

It localises to the nucleus. Its function is as follows. Transcriptional repressor that may play a role in the specification and differentiation of lung epithelium. May also play a role in developing neural, gastrointestinal and cardiovascular tissues. Can act with CTBP1 to synergistically repress transcription but CTPBP1 is not essential. Plays a role in synapse formation by regulating SRPX2 levels. The polypeptide is Forkhead box protein P2 (FOXP2) (Hylobates lar (Lar gibbon)).